We begin with the raw amino-acid sequence, 599 residues long: NADH-quinone oxidoreductase subunit C/D (599 aa).

The segment at 1–189 is NADH dehydrogenase I subunit C; that stretch reads MTELMTQNSA…DPFVLTKQKE (189 aa). An NADH dehydrogenase I subunit D region spans residues 213–599; sequence DFMFLNLGPN…IDFVMSDVDR (387 aa).

In the N-terminal section; belongs to the complex I 30 kDa subunit family. It in the C-terminal section; belongs to the complex I 49 kDa subunit family. NDH-1 is composed of 13 different subunits. Subunits NuoB, CD, E, F, and G constitute the peripheral sector of the complex.

The protein localises to the cell inner membrane. The catalysed reaction is a quinone + NADH + 5 H(+)(in) = a quinol + NAD(+) + 4 H(+)(out). Functionally, NDH-1 shuttles electrons from NADH, via FMN and iron-sulfur (Fe-S) centers, to quinones in the respiratory chain. The immediate electron acceptor for the enzyme in this species is believed to be ubiquinone. Couples the redox reaction to proton translocation (for every two electrons transferred, four hydrogen ions are translocated across the cytoplasmic membrane), and thus conserves the redox energy in a proton gradient. This is NADH-quinone oxidoreductase subunit C/D from Sodalis glossinidius (strain morsitans).